The sequence spans 366 residues: Probable methyltransferase-like protein 24 (366 aa).

The N-terminal stretch at 1–29 (MARERPPGRGCGVLRRCLLGAVLLFGLRL) is a signal peptide. Positions 36-110 (AGPGSPTRSA…GRPRRKGPRW (75 aa)) are disordered. Pro residues predominate over residues 44-63 (SAPPGPAWRPPGPHLPPAPG). Residues 91–100 (TPEPGCCAPR) are compositionally biased toward low complexity.

Belongs to the methyltransferase superfamily.

The protein resides in the secreted. In terms of biological role, probable methyltransferase. This Homo sapiens (Human) protein is Probable methyltransferase-like protein 24 (METTL24).